The primary structure comprises 190 residues: Lipocalin Can f 6.0101 (190 aa).

Residues 1 to 15 (MKLLLLCLGLILVHA) form the signal peptide. An igE-binding region spans residues 43–54 (SDIKEKIEENGS). N-linked (GlcNAc...) asparagine glycosylation is found at Asn-52 and Asn-67. Residues 76 to 83 (TKVNGKCT) form an igE-binding region. An intrachain disulfide couples Cys-82 to Cys-175. N-linked (GlcNAc...) asparagine glycosylation occurs at Asn-90. The tract at residues 91–97 (KTEKDGE) is igE-binding. The segment at 100-109 (VVHDGYNLFR) is no IgE-binding. 2 igE-binding regions span residues 125 to 132 (NVNQEQEF) and 139 to 152 (GRKPDVSPKVKEKF).

The protein belongs to the calycin superfamily. Lipocalin family. In terms of assembly, monomer. Expressed in saliva (at protein level). Expressed in dander (at protein level). According to PubMed:22104604, expressed in submaxillary gland. In contrast, according to PubMed:22515174, not expressed in submaxillary gland. Expressed in bladder and skin, but not in tongue.

The protein localises to the secreted. The polypeptide is Lipocalin Can f 6.0101 (Canis lupus familiaris (Dog)).